The primary structure comprises 227 residues: MEALKKIAGVTAAQYVTDGMTIGLGTGSTAYYFVEEIGRRVKQEGLQVVGVTTSSVTSKQAEVLGIPLKSIDDIDSIDLTVDGADEVDKDFNGIKGGGAALLMEKIVATPTKEYIWVVDASKMVEHLGAFKLPVEVVQYGADRLFRVFEKAGYKPSFRMKGDSRLVTDMQNYIIDLDLGCIKDPVAFGHLLDGTVGVVEHGLFNGMVDKVIVASKDGVTVLEVPKAS.

Residues 26-29, 82-85, and 95-98 contribute to the substrate site; these read TGST, DGAD, and KGGG. E104 (proton acceptor) is an active-site residue. K122 is a substrate binding site.

This sequence belongs to the ribose 5-phosphate isomerase family. In terms of assembly, homodimer.

The catalysed reaction is aldehydo-D-ribose 5-phosphate = D-ribulose 5-phosphate. The protein operates within carbohydrate degradation; pentose phosphate pathway; D-ribose 5-phosphate from D-ribulose 5-phosphate (non-oxidative stage): step 1/1. Catalyzes the reversible conversion of ribose-5-phosphate to ribulose 5-phosphate. The sequence is that of Ribose-5-phosphate isomerase A from Streptococcus pyogenes serotype M28 (strain MGAS6180).